A 134-amino-acid polypeptide reads, in one-letter code: Fluoride-specific ion channel FluC 2 (134 aa).

Transmembrane regions (helical) follow at residues Ile-8–Trp-28, Ile-40–Val-60, Leu-69–Leu-89, and Leu-99–Leu-119. Na(+) is bound by residues Gly-75 and Thr-78.

This sequence belongs to the fluoride channel Fluc/FEX (TC 1.A.43) family.

Its subcellular location is the cell membrane. The enzyme catalyses fluoride(in) = fluoride(out). Its activity is regulated as follows. Na(+) is not transported, but it plays an essential structural role and its presence is essential for fluoride channel function. In terms of biological role, fluoride-specific ion channel. Important for reducing fluoride concentration in the cell, thus reducing its toxicity. The chain is Fluoride-specific ion channel FluC 2 from Halalkalibacterium halodurans (strain ATCC BAA-125 / DSM 18197 / FERM 7344 / JCM 9153 / C-125) (Bacillus halodurans).